We begin with the raw amino-acid sequence, 257 residues long: uncharacterized protein (257 aa).

This is an uncharacterized protein from Dictyostelium discoideum (Social amoeba).